A 570-amino-acid polypeptide reads, in one-letter code: Sulfite reductase [NADPH] hemoprotein beta-component (570 aa).

The [4Fe-4S] cluster site is built by Cys-434, Cys-440, Cys-479, and Cys-483. Cys-483 is a binding site for siroheme.

The protein belongs to the nitrite and sulfite reductase 4Fe-4S domain family. Alpha(8)-beta(8). The alpha component is a flavoprotein, the beta component is a hemoprotein. The cofactor is siroheme. [4Fe-4S] cluster is required as a cofactor.

The catalysed reaction is hydrogen sulfide + 3 NADP(+) + 3 H2O = sulfite + 3 NADPH + 4 H(+). Its pathway is sulfur metabolism; hydrogen sulfide biosynthesis; hydrogen sulfide from sulfite (NADPH route): step 1/1. Its function is as follows. Component of the sulfite reductase complex that catalyzes the 6-electron reduction of sulfite to sulfide. This is one of several activities required for the biosynthesis of L-cysteine from sulfate. This Salmonella heidelberg (strain SL476) protein is Sulfite reductase [NADPH] hemoprotein beta-component.